Here is a 604-residue protein sequence, read N- to C-terminus: Kelch-like protein 20 (604 aa).

The 68-residue stretch at 63–130 (CDVVLVVGAK…AYTSQITVEE (68 aa)) folds into the BTB domain. The BACK domain occupies 165–267 (CLGIRAFADT…SPKFLVGTVG (103 aa)). Kelch repeat units lie at residues 314–360 (VLFA…VLDD), 362–408 (LYAV…VLGG), 409–455 (FLYA…VLGG), 457–502 (LYAV…VYQD), 504–549 (IYAV…VVNG), and 551–596 (LMAV…VIKM).

As to quaternary structure, component of the BCR(KLHL20) E3 ubiquitin ligase complex, at least composed of CUL3, KLHL20 and RBX1. Interacts with PDZ-RhoGEF/ARHGEF11, DAPK1, PML and CORO7. Interacts with F-actin. Interacts with IFN-gamma (IFNG). Interacts (via kelch repeats) with IVNS1ABP (via kelch repeats); this interaction blocks the assembly of CUL3-KLHL20 complex.

The protein resides in the cytoplasm. It localises to the perinuclear region. It is found in the nucleus. The protein localises to the golgi apparatus. Its subcellular location is the trans-Golgi network. The protein resides in the cell projection. It localises to the axon. It is found in the dendrite. It functions in the pathway protein modification; protein ubiquitination. Substrate-specific adapter of a BCR (BTB-CUL3-RBX1) E3 ubiquitin-protein ligase complex involved in interferon response and anterograde Golgi to endosome transport. The BCR(KLHL20) E3 ubiquitin ligase complex mediates the ubiquitination of DAPK1, leading to its degradation by the proteasome, thereby acting as a negative regulator of apoptosis. The BCR(KLHL20) E3 ubiquitin ligase complex also specifically mediates 'Lys-33'-linked ubiquitination. Involved in anterograde Golgi to endosome transport by mediating 'Lys-33'-linked ubiquitination of CORO7, promoting interaction between CORO7 and EPS15, thereby facilitating actin polymerization and post-Golgi trafficking. Also acts as a regulator of endothelial migration during angiogenesis by controlling the activation of Rho GTPases. The BCR(KLHL20) E3 ubiquitin ligase complex acts as a regulator of neurite outgrowth by mediating ubiquitination and degradation of PDZ-RhoGEF/ARHGEF11. The chain is Kelch-like protein 20 (Klhl20) from Mus musculus (Mouse).